Here is a 466-residue protein sequence, read N- to C-terminus: Cytochrome c-552 (466 aa).

The first 27 residues, Met1–Ala27, serve as a signal peptide directing secretion. His87 lines the heme c pocket. Heme-binding residues include Cys115, Cys118, and Lys119. Residues Cys153, Cys156, His157, Cys195, Cys198, and His199 each coordinate heme c. 4 residues coordinate Ca(2+): Glu201, Tyr202, Lys250, and Gln252. Tyr202 contributes to the substrate binding site. His253 serves as a coordination point for substrate. The heme c site is built by His264, Cys271, Cys274, His275, His290, Cys303, Cys306, His307, and His382.

The protein belongs to the cytochrome c-552 family. It depends on Ca(2+) as a cofactor. Heme c serves as cofactor.

The protein localises to the periplasm. The catalysed reaction is 6 Fe(III)-[cytochrome c] + NH4(+) + 2 H2O = 6 Fe(II)-[cytochrome c] + nitrite + 8 H(+). It participates in nitrogen metabolism; nitrate reduction (assimilation). Catalyzes the reduction of nitrite to ammonia, consuming six electrons in the process. In Shewanella sediminis (strain HAW-EB3), this protein is Cytochrome c-552.